The sequence spans 197 residues: FMN-dependent NADH:quinone oxidoreductase (197 aa).

Residues S10, 16-18 (SQS), 93-96 (MYNF), and 137-140 (TRGG) each bind FMN.

Belongs to the azoreductase type 1 family. In terms of assembly, homodimer. Requires FMN as cofactor.

The catalysed reaction is 2 a quinone + NADH + H(+) = 2 a 1,4-benzosemiquinone + NAD(+). It catalyses the reaction N,N-dimethyl-1,4-phenylenediamine + anthranilate + 2 NAD(+) = 2-(4-dimethylaminophenyl)diazenylbenzoate + 2 NADH + 2 H(+). In terms of biological role, quinone reductase that provides resistance to thiol-specific stress caused by electrophilic quinones. Its function is as follows. Also exhibits azoreductase activity. Catalyzes the reductive cleavage of the azo bond in aromatic azo compounds to the corresponding amines. This is FMN-dependent NADH:quinone oxidoreductase from Shewanella frigidimarina (strain NCIMB 400).